A 99-amino-acid polypeptide reads, in one-letter code: MTEHIEHPQWYLYILRTITGALYTGITTDVSRRLNQHQTGKGAKALRGKGELTLVFHCLAGDRSNALKLEYRIKQLSKNQKERLVQDQPQTLCISDTMY.

One can recognise a GIY-YIG domain in the interval P8 to R83.

This sequence belongs to the UPF0213 family.

This Pectobacterium carotovorum subsp. carotovorum (strain PC1) protein is UPF0213 protein PC1_0597.